The primary structure comprises 193 residues: Xanthine phosphoribosyltransferase (193 aa).

Positions 20 and 27 each coordinate xanthine. Ala129 to Ala133 is a 5-phospho-alpha-D-ribose 1-diphosphate binding site. Residue Lys157 coordinates xanthine.

This sequence belongs to the purine/pyrimidine phosphoribosyltransferase family. Xpt subfamily. In terms of assembly, homodimer.

The protein localises to the cytoplasm. It carries out the reaction XMP + diphosphate = xanthine + 5-phospho-alpha-D-ribose 1-diphosphate. It functions in the pathway purine metabolism; XMP biosynthesis via salvage pathway; XMP from xanthine: step 1/1. In terms of biological role, converts the preformed base xanthine, a product of nucleic acid breakdown, to xanthosine 5'-monophosphate (XMP), so it can be reused for RNA or DNA synthesis. The chain is Xanthine phosphoribosyltransferase from Bifidobacterium animalis subsp. lactis (strain AD011).